Consider the following 443-residue polypeptide: MVKERRTELVQGFRHSVPYINTHRGKTFVIMLGGEAIEHENFSSIVNDIGLLHSLGIRLVVVYGARPQIDANLAAHHHEPIYHKHTRVTDAKTLELVKQAAGLLQLDITARLSMSLNNTPLQGAHINVVSGNFIISQPLGVDDGVDYCHSGRIRRIDEEAIHRQLDSGAIVLMGPVAVSVTGESFNLTSEEVATQLAIKLKAEKMIGFCSSQGVFDEQGNIVSELFPNEAQARVETLEAEGDYHSGTVRFLRGAVKACRSGVRRSHLISYQEDGALLQELFSRDGIGTQIVMESAEQIRRATINDIGGILELIRPLEQQGILVRRSREQLEMEIDKFTIIQRDNLTIACAALYPFPEEKIGEMACVAVHPDYRSSSRGEVLLERVAAQARQIGLSKLFVLTTRSIHWFQERGFTPVDIDSLPESKKEMYNYQRRSKVLMADLG.

The N-acetyltransferase domain occupies 296–435 (EQIRRATIND…KEMYNYQRRS (140 aa)).

Belongs to the acetyltransferase family. ArgA subfamily. In terms of assembly, homohexamer.

It localises to the cytoplasm. It catalyses the reaction L-glutamate + acetyl-CoA = N-acetyl-L-glutamate + CoA + H(+). It functions in the pathway amino-acid biosynthesis; L-arginine biosynthesis; N(2)-acetyl-L-ornithine from L-glutamate: step 1/4. This is Amino-acid acetyltransferase from Enterobacter sp. (strain 638).